We begin with the raw amino-acid sequence, 257 residues long: MVLIRVLANLLILQLSYAQKSSELIIGGDECNINEHRSLVLMYYDGHQCDGTLINEEWVLTAAHCDGENMEIQLGVHSKKVPNEDVQTRVPKEKFFCDSNKTYARWNKDIMLIRLDRPVSNSAHIAPLSLPSSPPSVGSVCRIMGWGTFSTTQETYPDVPHCANINIHDFEVCQAAYPGLPATNRILCAGILEGGKDTCKGDSGGPLICNGEIQGIVSWGGHLCGNVLEPGIYTKVFDHLEWIRSIIAGNTDATCPL.

The signal sequence occupies residues 1 to 18; that stretch reads MVLIRVLANLLILQLSYA. A propeptide spanning residues 19–24 is cleaved from the precursor; it reads QKSSEL. One can recognise a Peptidase S1 domain in the interval 25-248; that stretch reads IIGGDECNIN…HLEWIRSIIA (224 aa). 6 cysteine pairs are disulfide-bonded: cysteine 31–cysteine 162, cysteine 49–cysteine 65, cysteine 97–cysteine 255, cysteine 141–cysteine 209, cysteine 173–cysteine 188, and cysteine 199–cysteine 224. The active-site Charge relay system is the histidine 64. A glycan (N-linked (GlcNAc...) asparagine) is linked at asparagine 100. Aspartate 109 functions as the Charge relay system in the catalytic mechanism. Catalysis depends on serine 203, which acts as the Charge relay system.

The protein belongs to the peptidase S1 family. Snake venom subfamily. In terms of assembly, monomer. As to expression, expressed by the venom gland.

It is found in the secreted. Its function is as follows. Snake venom serine protease that may act in the hemostasis system of the prey. The sequence is that of Snake venom serine protease Haly-2 from Gloydius brevicauda (Korean slamosa snake).